Reading from the N-terminus, the 582-residue chain is Vesicular glutamate transporter 2 (582 aa).

The Cytoplasmic segment spans residues 1–71 (MESVKQRILA…CTCFGLPRRY (71 aa)). A helical membrane pass occupies residues 72 to 92 (IIAIMSGLGFCISFGIRCNLG). The Vesicular portion of the chain corresponds to 93–125 (VAIVDMVNNSTIHRGGKVIKEKAKFNWDPETVG). N-linked (GlcNAc...) asparagine glycans are attached at residues N100 and N101. Residues 126–146 (MIHGSFFWGYIITQIPGGYIA) traverse the membrane as a helical segment. The Cytoplasmic segment spans residues 147 to 148 (SR). The chain crosses the membrane as a helical span at residues 149–169 (LAANRVFGAAILLTSTLNMLI). Residues 170–177 (PSAARVHY) lie on the Vesicular side of the membrane. The chain crosses the membrane as a helical span at residues 178 to 198 (GCVIFVRILQGLVEGVTYPAC). The Cytoplasmic portion of the chain corresponds to 199-216 (HGIWSKWAPPLERSRLAT). The chain crosses the membrane as a helical span at residues 217 to 237 (TSFCGSYAGAVIAMPLAGILV). Topologically, residues 238-244 (QYTGWSS) are vesicular. The helical transmembrane segment at 245–265 (VFYVYGSFGMVWYMFWLLVSY) threads the bilayer. The Cytoplasmic segment spans residues 266–310 (ESPAKHPTITDEERRYIEESIGESANLLGAMEKFKTPWRKFFTSM). The chain crosses the membrane as a helical span at residues 311–331 (PVYAIIVANFCRSWTFYLLLI). Residues 332–349 (SQPAYFEEVFGFEISKVG) are Vesicular-facing. The chain crosses the membrane as a helical span at residues 350 to 370 (MLSAVPHLVMTIIVPIGGQIA). The Cytoplasmic segment spans residues 371 to 386 (DFLRSKQILSTTTVRK). The helical transmembrane segment at 387 to 407 (IMNCGGFGMEATLLLVVGYSH) threads the bilayer. Residues 408-409 (TR) lie on the Vesicular side of the membrane. The chain crosses the membrane as a helical span at residues 410 to 430 (GVAISFLVLAVGFSGFAISGF). Topologically, residues 431 to 443 (NVNHLDIAPRYAS) are cytoplasmic. The chain crosses the membrane as a helical span at residues 444–464 (ILMGISNGVGTLSGMVCPIIV). Residues 465–477 (GAMTKNKSREEWQ) are Vesicular-facing. N-linked (GlcNAc...) asparagine glycosylation is present at N470. The helical transmembrane segment at 478 to 498 (YVFLIAALVHYGGVIFYAIFA) threads the bilayer. The Cytoplasmic portion of the chain corresponds to 499–582 (SGEKQPWADP…HSYKDRVDYS (84 aa)).

It belongs to the major facilitator superfamily. Sodium/anion cotransporter family. VGLUT subfamily. As to expression, predominantly expressed in adult brain. Expressed in amygdala, caudate nucleus, cerebral cortex, frontal lobe, hippocampus, medulla, occipital lobe, putamen, spinal cord, substantia nigra, subthalamic nucleus, temporal lobe and thalamus.

It is found in the cytoplasmic vesicle. The protein resides in the secretory vesicle. It localises to the synaptic vesicle membrane. Its subcellular location is the synapse. The protein localises to the synaptosome. It is found in the cell membrane. The catalysed reaction is L-glutamate(out) = L-glutamate(in). It carries out the reaction 3 Na(+)(out) + phosphate(out) = 3 Na(+)(in) + phosphate(in). It catalyses the reaction phosphate(in) = phosphate(out). The enzyme catalyses K(+)(in) + H(+)(out) = K(+)(out) + H(+)(in). The catalysed reaction is chloride(in) = chloride(out). Chloride channel activity is allosterically activated by lumenal H(+) and Cl(-) leading to synaptic vesicles acidification. The L-glutamate transport activity is allosterically activated by lumenal H(+) and Cl(-). The allosteric requirement for H(+) efficiently prevents non-vesicular efflux across the plasma membrane. The L-glutamate uniporter activity exhibits a biphasic dependence on chloride concentration. Functionally, multifunctional transporter that transports L-glutamate as well as multiple ions such as chloride, proton, potassium, sodium and phosphate. At the synaptic vesicle membrane, mainly functions as a uniporter which transports preferentially L-glutamate but also, phosphate from the cytoplasm into synaptic vesicles at presynaptic nerve terminals of excitatory neural cells. The L-glutamate or phosphate uniporter activity is electrogenic and is driven by the proton electrochemical gradient, mainly by the electrical gradient established by the vacuolar H(+)-ATPase across the synaptic vesicle membrane. In addition, functions as a chloride channel that allows the chloride permeation through the synaptic vesicle membrane therefore affects the proton electrochemical gradient and promotes synaptic vesicles acidification. Moreover, functions as a vesicular K(+)/H(+) antiport allowing to maintain the electrical gradient and to decrease chemical gradient and therefore sustain vesicular glutamate uptake. The vesicular H(+)/H(+) antiport activity is electroneutral. At the plasma membrane, following exocytosis, functions as a symporter of Na(+) and phosphate from the extracellular space to the cytoplasm allowing synaptic phosphate homeostasis regulation. The symporter activity is driven by an inside negative membrane potential and is electrogenic. Also involved in the regulation of retinal hyaloid vessel regression during postnatal development. May also play a role in the endocrine glutamatergic system of other tissues such as pineal gland and pancreas. This is Vesicular glutamate transporter 2 from Homo sapiens (Human).